Reading from the N-terminus, the 810-residue chain is F-BAR domain only protein 2 (810 aa).

Residues 3 to 250 (MAYFVENFWG…NMANTTVESL (248 aa)) enclose the F-BAR domain. Positions 3–274 (MAYFVENFWG…PGLIEFEECD (272 aa)) are mediates dimerization and binding to membranes enriched in Pi(4,5)-P2 and induces their tubulation. Residues 87–156 (HLDLVRKLQE…CVEQERLKKE (70 aa)) are a coiled coil. A Glycyl lysine isopeptide (Lys-Gly) (interchain with G-Cter in SUMO2) cross-link involves residue Lys297. Residues 301-352 (DAESVECPDADSLNIPDVDEEGYSIKPETNQNDTKENHFYSSSDSDSEDEEP) form a disordered region. Position 312 is a phosphoserine (Ser312). Thr385 is modified (phosphothreonine). Phosphoserine is present on residues Ser387, Ser394, and Ser403. The disordered stretch occupies residues 404-537 (NEELTKSKPS…VSRGPSPVSL (134 aa)). The span at 433-456 (PSLDSSSSSSLTSSSSARPTTPLS) shows a compositional bias: low complexity. Phosphoserine occurs at positions 488, 493, 496, 508, 510, 511, and 533. Low complexity predominate over residues 502–521 (PLARAESSSSISSSASLSAA). Residues 521 to 810 (ANTPTVGVSR…FATGRYLADC (290 aa)) form a mediates interaction with DAB2, EPS15, EPS15R and ITSN1 region. The region spanning 542-809 (TLPVAVALTE…RFATGRYLAD (268 aa)) is the MHD domain.

The protein belongs to the FCHO family. In terms of assembly, homodimer; disulfide-linked. May form homotetramer. Interacts with AP2A1. Interacts with EPS15, EPS15R, ITSN1 and ITSN2; recruit those scaffolding proteins which in turn may interact with the adaptor protein complex AP-2 at the plasma membrane. Interacts with DAB2 (via DPF motifs); mediates LDL receptor/LDLR endocytosis. In terms of processing, ubiquitinated. Mainly undergoes monoubiquitination but also polyubiquitination.

It localises to the membrane. The protein resides in the clathrin-coated pit. Functions in an early step of clathrin-mediated endocytosis. Has both a membrane binding/bending activity and the ability to recruit proteins essential to the formation of functional clathrin-coated pits. Has a lipid-binding activity with a preference for membranes enriched in phosphatidylserine and phosphoinositides (Pi(4,5) biphosphate) like the plasma membrane. Its membrane-bending activity might be important for the subsequent action of clathrin and adaptors in the formation of clathrin-coated vesicles. Involved in adaptor protein complex AP-2-dependent endocytosis of the transferrin receptor, it also functions in the AP-2-independent endocytosis of the LDL receptor. This is F-BAR domain only protein 2 (FCHO2) from Homo sapiens (Human).